The sequence spans 394 residues: Acid ceramidase (394 aa).

A signal peptide spans 1-18 (MRGQSLLTWVLAAAVTCA). An intrachain disulfide couples cysteine 30 to cysteine 339. Cysteine 142 functions as the Nucleophile in the catalytic mechanism. Asparagine 172, asparagine 194, asparagine 258, asparagine 341, and asparagine 347 each carry an N-linked (GlcNAc...) asparagine glycan. Cysteine 387 and cysteine 391 are disulfide-bonded.

This sequence belongs to the acid ceramidase family. Heterodimer; disulfide-linked. The heterodimer is composed of the disulfide-linked alpha and beta chains produced by autocatalytic cleavage of the precursor. Post-translationally, N-glycosylated. In terms of processing, proteolytically cleaved into two chains alpha and beta that remain associated via a disulfide bond. Cleavage gives rise to a conformation change that activates the enzyme. The same catalytic Cys residue mediates the autoproteolytic cleavage and subsequent hydrolysis of lipid substrates. The beta chain may undergo an additional C-terminal processing. In terms of tissue distribution, widely expressed.

Its subcellular location is the lysosome. It is found in the secreted. The catalysed reaction is an N-acylsphing-4-enine + H2O = sphing-4-enine + a fatty acid. The enzyme catalyses N-dodecanoylsphing-4-enine + H2O = dodecanoate + sphing-4-enine. It catalyses the reaction N-(9Z-octadecenoyl)-sphing-4-enine + H2O = sphing-4-enine + (9Z)-octadecenoate. It carries out the reaction N-tetradecanoylsphing-4-enine + H2O = tetradecanoate + sphing-4-enine. The catalysed reaction is N-hexadecanoylsphing-4-enine + H2O = sphing-4-enine + hexadecanoate. The enzyme catalyses N-octadecanoylsphing-4-enine + H2O = sphing-4-enine + octadecanoate. It catalyses the reaction N-dodecanoyl-(4R)-hydroxysphinganine + H2O = (4R)-hydroxysphinganine + dodecanoate. It carries out the reaction N-(dodecanoyl)-sphinganine + H2O = dodecanoate + sphinganine. The catalysed reaction is N-(acetyl)-sphing-4-enine + H2O = sphing-4-enine + acetate. The enzyme catalyses N-(hexanoyl)sphing-4-enine + H2O = hexanoate + sphing-4-enine. It catalyses the reaction N-octanoylsphing-4-enine + H2O = octanoate + sphing-4-enine. It carries out the reaction N-dodecanoylethanolamine + H2O = dodecanoate + ethanolamine. It participates in lipid metabolism; sphingolipid metabolism. Functionally, lysosomal ceramidase that hydrolyzes sphingolipid ceramides into sphingosine and free fatty acids at acidic pH. Ceramides, sphingosine, and its phosphorylated form sphingosine-1-phosphate are bioactive lipids that mediate cellular signaling pathways regulating several biological processes including cell proliferation, apoptosis and differentiation. Has a higher catalytic efficiency towards C12-ceramides versus other ceramides. Also catalyzes the reverse reaction allowing the synthesis of ceramides from fatty acids and sphingosine. For the reverse synthetic reaction, the natural sphingosine D-erythro isomer is more efficiently utilized as a substrate compared to D-erythro-dihydrosphingosine and D-erythro-phytosphingosine, while the fatty acids with chain lengths of 12 or 14 carbons are the most efficiently used. Also has an N-acylethanolamine hydrolase activity. By regulating the levels of ceramides, sphingosine and sphingosine-1-phosphate in the epidermis, mediates the calcium-induced differentiation of epidermal keratinocytes. Also indirectly regulates tumor necrosis factor/TNF-induced apoptosis. By regulating the intracellular balance between ceramides and sphingosine, in adrenocortical cells, probably also acts as a regulator of steroidogenesis. The chain is Acid ceramidase from Mus musculus (Mouse).